The primary structure comprises 204 residues: Proteasome subunit beta type-3-B (204 aa).

Belongs to the peptidase T1B family. As to quaternary structure, component of the 20S core complex of the 26S proteasome. The 26S proteasome is composed of a core protease (CP), known as the 20S proteasome, capped at one or both ends by the 19S regulatory particle (RP/PA700). The 20S proteasome core is composed of 28 subunits that are arranged in four stacked rings, resulting in a barrel-shaped structure. The two end rings are each formed by seven alpha subunits, and the two central rings are each formed by seven beta subunits. The catalytic chamber with the active sites is on the inside of the barrel.

It is found in the cytoplasm. Its subcellular location is the nucleus. Non-catalytic component of the proteasome, a multicatalytic proteinase complex which is characterized by its ability to cleave peptides with Arg, Phe, Tyr, Leu, and Glu adjacent to the leaving group at neutral or slightly basic pH. The proteasome has an ATP-dependent proteolytic activity. The chain is Proteasome subunit beta type-3-B (PBC2) from Arabidopsis thaliana (Mouse-ear cress).